The chain runs to 399 residues: Methylmalonic aciduria type A homolog, mitochondrial (399 aa).

The transit peptide at 1 to 15 directs the protein to the mitochondrion; sequence MVVRSLLRVSRLTSA. GTP is bound by residues 131-139, Asp-274, and 310-312; these read GSPGVGKSS and SIM.

This sequence belongs to the SIMIBI class G3E GTPase family. ArgK/MeaB subfamily.

Its subcellular location is the mitochondrion. Functionally, may have GTPase activity. May also bind and hydrolyze ATP. May function as chaperone. Likely to have a role in propionyl-CoA and adenosylcobalamin metabolism. This Caenorhabditis elegans protein is Methylmalonic aciduria type A homolog, mitochondrial (mmaa-1).